Here is a 376-residue protein sequence, read N- to C-terminus: Succinyl-diaminopimelate desuccinylase (376 aa).

H66 contacts Zn(2+). D68 is an active-site residue. A Zn(2+)-binding site is contributed by D99. The Proton acceptor role is filled by E133. Residues E134, E162, and H349 each coordinate Zn(2+).

This sequence belongs to the peptidase M20A family. DapE subfamily. As to quaternary structure, homodimer. The cofactor is Zn(2+). Co(2+) is required as a cofactor.

It carries out the reaction N-succinyl-(2S,6S)-2,6-diaminopimelate + H2O = (2S,6S)-2,6-diaminopimelate + succinate. It participates in amino-acid biosynthesis; L-lysine biosynthesis via DAP pathway; LL-2,6-diaminopimelate from (S)-tetrahydrodipicolinate (succinylase route): step 3/3. In terms of biological role, catalyzes the hydrolysis of N-succinyl-L,L-diaminopimelic acid (SDAP), forming succinate and LL-2,6-diaminopimelate (DAP), an intermediate involved in the bacterial biosynthesis of lysine and meso-diaminopimelic acid, an essential component of bacterial cell walls. The protein is Succinyl-diaminopimelate desuccinylase of Vesicomyosocius okutanii subsp. Calyptogena okutanii (strain HA).